Consider the following 114-residue polypeptide: uncharacterized protein (114 aa).

G2 carries N-myristoyl glycine; by host lipidation. Helical transmembrane passes span 11–31 and 44–64; these read FGLILVGAIIFTASYLWKDLL and GLMWRSIYTILVTVILVLVAI. A disordered region spans residues 73–114; that stretch reads VNKDSKDPKDKSIEFDDSPIRDGSSGTPDNSNEPTDLSVETS. Over residues 75–92 the composition is skewed to basic and acidic residues; the sequence is KDSKDPKDKSIEFDDSPI. The segment covering 96 to 114 has biased composition (polar residues); it reads SSGTPDNSNEPTDLSVETS.

Its subcellular location is the membrane. This is an uncharacterized protein from Acanthamoeba polyphaga (Amoeba).